We begin with the raw amino-acid sequence, 546 residues long: U3 small nucleolar RNA-associated protein 18 homolog (546 aa).

3 disordered regions span residues 1 to 55 (MSLS…LEES), 94 to 118 (SAVRQIPDYEDDGDDDEELSDEENG), and 177 to 205 (NPGTDWARPDSQIVDGESSDDDDTQDGGV). Over residues 13-23 (IKREELKKQYE) the composition is skewed to basic and acidic residues. A compositionally biased stretch (acidic residues) spans 24–35 (DVEDEEEIGSDD). S33 bears the Phosphoserine mark. Basic and acidic residues predominate over residues 45-55 (TEKEKQKLEES). Composition is skewed to acidic residues over residues 101 to 117 (DYEDDGDDDEELSDEEN) and 193 to 205 (ESSDDDDTQDGGV). WD repeat units follow at residues 242–281 (PSNGPINSVHFHQNAQLLLTAGLDRRLRFFQIDGKRNTKI), 372–411 (KMNGSVRSLAFSEDGKHLLSSGGDGQVYVWDLRTMKCLYK), 413–454 (VDEG…GGKR), and 509–545 (STMHYPRCLDFSPGSGFMAMGNAAGKVLLYKLHHYQN). The DWD box motif lies at 389 to 404 (LLSSGGDGQVYVWDLR).

This sequence belongs to the WD repeat UTP18 family.

It is found in the nucleus. Its subcellular location is the nucleolus. Functionally, involved in nucleolar processing of pre-18S ribosomal RNA. The sequence is that of U3 small nucleolar RNA-associated protein 18 homolog from Arabidopsis thaliana (Mouse-ear cress).